A 371-amino-acid polypeptide reads, in one-letter code: MIPPCDPIILENNPQFRKLYQHLTTNLLNADGSTRANDEQPARKAVLEELRGCRVRSANKKIKQQILQQLAFDADSGLPDDYRDPLAVITLYLESSPSRLDLEDGDDHRSSHDQALSLLASDIDAFYSIIPALVIPFSNALSSALEDLRAIANAGKSLDCAASAPAIPHTSTLPTRTRIRTSRNQFKAKSQAPLASQLRERLQKLRQIQLAQIPAARARMAITAAKVLETRAEILKHTVVLLERVKHGALSRATKSKAEHLALVAQGVEAKLRIIKLDTAAILYTPEVVTALDRYRQHLRETRERLEEKQGKLLEELKGYESMDSTETHELSARSSKEHFESGPMREIARRYGSLVKEIEAVKLEIQRISG.

Residues 287–323 adopt a coiled-coil conformation; it reads EVVTALDRYRQHLRETRERLEEKQGKLLEELKGYESM.

This is an uncharacterized protein from Aspergillus fumigatus (strain ATCC MYA-4609 / CBS 101355 / FGSC A1100 / Af293) (Neosartorya fumigata).